A 473-amino-acid chain; its full sequence is Photosystem II CP43 reaction center protein (473 aa).

The propeptide occupies methionine 1–glutamate 14. Threonine 15 carries the post-translational modification N-acetylthreonine. The residue at position 15 (threonine 15) is a Phosphothreonine. 5 helical membrane-spanning segments follow: residues leucine 69–alanine 93, leucine 134–asparagine 155, lysine 178–threonine 200, lysine 255–serine 275, and tryptophan 291–alanine 312. Residue glutamate 367 coordinates [CaMn4O5] cluster. Residues arginine 447 to proline 471 traverse the membrane as a helical segment.

Belongs to the PsbB/PsbC family. PsbC subfamily. In terms of assembly, PSII is composed of 1 copy each of membrane proteins PsbA, PsbB, PsbC, PsbD, PsbE, PsbF, PsbH, PsbI, PsbJ, PsbK, PsbL, PsbM, PsbT, PsbX, PsbY, PsbZ, Psb30/Ycf12, at least 3 peripheral proteins of the oxygen-evolving complex and a large number of cofactors. It forms dimeric complexes. Requires Binds multiple chlorophylls and provides some of the ligands for the Ca-4Mn-5O cluster of the oxygen-evolving complex. It may also provide a ligand for a Cl- that is required for oxygen evolution. PSII binds additional chlorophylls, carotenoids and specific lipids. as cofactor. Phosphorylated on threonine residue(s); phosphorylation increases with increasing light levels.

It is found in the plastid. The protein localises to the chloroplast thylakoid membrane. One of the components of the core complex of photosystem II (PSII). It binds chlorophyll and helps catalyze the primary light-induced photochemical processes of PSII. PSII is a light-driven water:plastoquinone oxidoreductase, using light energy to abstract electrons from H(2)O, generating O(2) and a proton gradient subsequently used for ATP formation. The sequence is that of Photosystem II CP43 reaction center protein from Secale cereale (Rye).